The primary structure comprises 259 residues: Thiazole synthase (259 aa).

Lys100 acts as the Schiff-base intermediate with DXP in catalysis. 1-deoxy-D-xylulose 5-phosphate contacts are provided by residues Gly161, 187–188 (AG), and 209–210 (NT).

It belongs to the ThiG family. In terms of assembly, homotetramer. Forms heterodimers with either ThiH or ThiS.

It localises to the cytoplasm. The enzyme catalyses [ThiS sulfur-carrier protein]-C-terminal-Gly-aminoethanethioate + 2-iminoacetate + 1-deoxy-D-xylulose 5-phosphate = [ThiS sulfur-carrier protein]-C-terminal Gly-Gly + 2-[(2R,5Z)-2-carboxy-4-methylthiazol-5(2H)-ylidene]ethyl phosphate + 2 H2O + H(+). It participates in cofactor biosynthesis; thiamine diphosphate biosynthesis. Its function is as follows. Catalyzes the rearrangement of 1-deoxy-D-xylulose 5-phosphate (DXP) to produce the thiazole phosphate moiety of thiamine. Sulfur is provided by the thiocarboxylate moiety of the carrier protein ThiS. In vitro, sulfur can be provided by H(2)S. The polypeptide is Thiazole synthase (Methylobacillus flagellatus (strain ATCC 51484 / DSM 6875 / VKM B-1610 / KT)).